Reading from the N-terminus, the 981-residue chain is Mediator of RNA polymerase II transcription subunit 5 (981 aa).

The protein belongs to the Mediator complex subunit 5 family. Component of the Mediator complex.

It is found in the nucleus. In terms of biological role, component of the Mediator complex, a coactivator involved in the regulated transcription of nearly all RNA polymerase II-dependent genes. Mediator functions as a bridge to convey information from gene-specific regulatory proteins to the basal RNA polymerase II transcription machinery. Mediator is recruited to promoters by direct interactions with regulatory proteins and serves as a scaffold for the assembly of a functional preinitiation complex with RNA polymerase II and the general transcription factors. This chain is Mediator of RNA polymerase II transcription subunit 5 (NUT1), found in Scheffersomyces stipitis (strain ATCC 58785 / CBS 6054 / NBRC 10063 / NRRL Y-11545) (Yeast).